Consider the following 442-residue polypeptide: UDP-N-acetylmuramate--L-alanine ligase (442 aa).

Residue 110–116 coordinates ATP; that stretch reads GAHGKTS.

The protein belongs to the MurCDEF family.

It localises to the cytoplasm. The catalysed reaction is UDP-N-acetyl-alpha-D-muramate + L-alanine + ATP = UDP-N-acetyl-alpha-D-muramoyl-L-alanine + ADP + phosphate + H(+). It participates in cell wall biogenesis; peptidoglycan biosynthesis. Functionally, cell wall formation. The protein is UDP-N-acetylmuramate--L-alanine ligase of Streptococcus thermophilus (strain ATCC BAA-491 / LMD-9).